Here is a 38-residue protein sequence, read N- to C-terminus: Large ribosomal subunit protein bL36 (38 aa).

Belongs to the bacterial ribosomal protein bL36 family.

The polypeptide is Large ribosomal subunit protein bL36 (Pseudoalteromonas atlantica (strain T6c / ATCC BAA-1087)).